A 117-amino-acid polypeptide reads, in one-letter code: Phosphoribosyl-ATP pyrophosphatase (117 aa).

Positions 96-105 (GVSGIEEKLS) are enriched in basic and acidic residues. The segment at 96–117 (GVSGIEEKLSRSQNQPEPTKAE) is disordered. Over residues 106–117 (RSQNQPEPTKAE) the composition is skewed to polar residues.

This sequence belongs to the PRA-PH family.

Its subcellular location is the cytoplasm. The catalysed reaction is 1-(5-phospho-beta-D-ribosyl)-ATP + H2O = 1-(5-phospho-beta-D-ribosyl)-5'-AMP + diphosphate + H(+). Its pathway is amino-acid biosynthesis; L-histidine biosynthesis; L-histidine from 5-phospho-alpha-D-ribose 1-diphosphate: step 2/9. The chain is Phosphoribosyl-ATP pyrophosphatase from Nitrosomonas eutropha (strain DSM 101675 / C91 / Nm57).